We begin with the raw amino-acid sequence, 302 residues long: MDIDTKIKAYRFVAYSAVVFSVIAVLSVCITLPIVYNYVHTVRRQLHNEALTCKGSMKDVWADVHHLRVDAASNRTARAVRYGRDDAAAGNGPNFDSGCEGCCQPGPQGAPGAPGKPGRPGKPGAPGFPGNPGKAPQKPCEEITPPPCKPCPQGPPGAPGLPGDQGDKGEAGQPGQPGSDAAPGEQGPKGPNGAPGKPGAPGAPGDEGLPAVCEPVQKGEPGSTGEPGPVGPPGPSGQPGNDGTPGQPGPKGPPGPDGKPGADGNPGQPGPVGPPGTPGERGICPKYCAIDGGIFFEDGTRR.

Triple-helical region stretches follow at residues G106–A135, G154–P210, and G219–P278. The disordered stretch occupies residues Q108–C284. The segment covering T144–P159 has biased composition (pro residues). The segment covering P188–K197 has biased composition (low complexity). Pro residues-rich tracts occupy residues Q247–D257 and Q268–T277.

This sequence belongs to the cuticular collagen family. In terms of assembly, collagen polypeptide chains are complexed within the cuticle by disulfide bonds and other types of covalent cross-links.

Functionally, nematode cuticles are composed largely of collagen-like proteins. The cuticle functions both as an exoskeleton and as a barrier to protect the worm from its environment. Mutations in dpy-13 affects the body shape. The chain is Cuticle collagen dpy-13 (dpy-13) from Caenorhabditis elegans.